Reading from the N-terminus, the 96-residue chain is MEQAPEDQGPQREPYNEWTLELLEELKSEAVRHFPRIWLHNLGQHIYETYGDTWAGVEAIIRILQQLLFIHFRIGCRHSRIGVTRQRRARNGASRS.

The interval 1–42 (MEQAPEDQGPQREPYNEWTLELLEELKSEAVRHFPRIWLHNL) is homooligomerization. Serine 79, serine 94, and serine 96 each carry phosphoserine; by host.

The protein belongs to the HIV-1 VPR protein family. Homooligomer, may form homodimer. Interacts with p6-gag region of the Pr55 Gag precursor protein through a (Leu-X-X)4 motif near the C-terminus of the P6gag protein. Interacts with host UNG. May interact with host RAD23A/HHR23A. Interacts with host VPRBP/DCAF1, leading to hijack the CUL4A-RBX1-DDB1-DCAF1/VPRBP complex, mediating ubiquitination of host proteins such as TERT and ZGPAT and arrest of the cell cycle in G2 phase. In terms of processing, phosphorylated on several residues by host. These phosphorylations regulate VPR activity for the nuclear import of the HIV-1 pre-integration complex.

The protein resides in the virion. It is found in the host nucleus. The protein localises to the host extracellular space. Functionally, during virus replication, may deplete host UNG protein, and incude G2-M cell cycle arrest. Acts by targeting specific host proteins for degradation by the 26S proteasome, through association with the cellular CUL4A-DDB1 E3 ligase complex by direct interaction with host VPRPB/DCAF-1. Cell cycle arrest reportedly occurs within hours of infection and is not blocked by antiviral agents, suggesting that it is initiated by the VPR carried into the virion. Additionally, VPR induces apoptosis in a cell cycle dependent manner suggesting that these two effects are mechanistically linked. Detected in the serum and cerebrospinal fluid of AIDS patient, VPR may also induce cell death to bystander cells. During virus entry, plays a role in the transport of the viral pre-integration (PIC) complex to the host nucleus. This function is crucial for viral infection of non-dividing macrophages. May act directly at the nuclear pore complex, by binding nucleoporins phenylalanine-glycine (FG)-repeat regions. The polypeptide is Protein Vpr (Homo sapiens (Human)).